The sequence spans 394 residues: MRPPSRCPGMRHNDGVSDIVRVLLLGSTGSIGTQALEVIAANPDKFEVVGLAARGGNPALLAEQMAATGTRNVAVADPAAGAALDIKLAGPHAVTELVRRTEADVVLNALVGSLGLEPTLATLTAGTRLALANKESLVAGGSLVTRAAAPGQIVPVDSEHSALAQCLRGGRADEVDRLVLTASGGPFRGWTAQMLESVNPEAAKAHPTWSMGLMNTLNSASLVNKGLELIETHLLFGIPYDRIDVTVHPQSIVHSMVTFVDGSTLAQASPPDMKLPIALALGWPDRVPGAAAACDFSTASTWTFEPVDTEVFPAVELARQAGQAGGSVTAVYNAANEVAVQAFLDGRIRFPEIVRTVARAVEAADRWRAEPETVEDVLAADRWARGRAAELVGA.

NADPH contacts are provided by threonine 28, glycine 29, serine 30, isoleucine 31, asparagine 57, and asparagine 133. Lysine 134 contacts 1-deoxy-D-xylulose 5-phosphate. Glutamate 135 serves as a coordination point for NADPH. Residue aspartate 157 coordinates Mn(2+). 1-deoxy-D-xylulose 5-phosphate contacts are provided by serine 158, glutamate 159, serine 183, and histidine 206. Residue glutamate 159 coordinates Mn(2+). An NADPH-binding site is contributed by glycine 212. 1-deoxy-D-xylulose 5-phosphate is bound by residues serine 219, asparagine 224, lysine 225, and glutamate 228. Glutamate 228 serves as a coordination point for Mn(2+).

The protein belongs to the DXR family. The cofactor is Mg(2+). Requires Mn(2+) as cofactor.

The enzyme catalyses 2-C-methyl-D-erythritol 4-phosphate + NADP(+) = 1-deoxy-D-xylulose 5-phosphate + NADPH + H(+). Its pathway is isoprenoid biosynthesis; isopentenyl diphosphate biosynthesis via DXP pathway; isopentenyl diphosphate from 1-deoxy-D-xylulose 5-phosphate: step 1/6. In terms of biological role, catalyzes the NADPH-dependent rearrangement and reduction of 1-deoxy-D-xylulose-5-phosphate (DXP) to 2-C-methyl-D-erythritol 4-phosphate (MEP). The sequence is that of 1-deoxy-D-xylulose 5-phosphate reductoisomerase from Nocardia farcinica (strain IFM 10152).